A 502-amino-acid polypeptide reads, in one-letter code: UPF0371 protein CLD_0424 (502 aa).

This sequence belongs to the UPF0371 family.

The polypeptide is UPF0371 protein CLD_0424 (Clostridium botulinum (strain Okra / Type B1)).